A 691-amino-acid polypeptide reads, in one-letter code: Elongation factor G (691 aa).

Residues 8 to 282 (ERVRNIGIAA…AVVDYLPAPI (275 aa)) form the tr-type G domain. Residues 17 to 24 (AHIDAGKT), 81 to 85 (DTPGH), and 135 to 138 (NKMD) each bind GTP.

The protein belongs to the TRAFAC class translation factor GTPase superfamily. Classic translation factor GTPase family. EF-G/EF-2 subfamily.

It localises to the cytoplasm. Its function is as follows. Catalyzes the GTP-dependent ribosomal translocation step during translation elongation. During this step, the ribosome changes from the pre-translocational (PRE) to the post-translocational (POST) state as the newly formed A-site-bound peptidyl-tRNA and P-site-bound deacylated tRNA move to the P and E sites, respectively. Catalyzes the coordinated movement of the two tRNA molecules, the mRNA and conformational changes in the ribosome. The sequence is that of Elongation factor G from Synechococcus sp. (strain WH7803).